A 669-amino-acid polypeptide reads, in one-letter code: DNA ligase (669 aa).

Residues 33–37 (DAEYD), 82–83 (SL), and E114 each bind NAD(+). Catalysis depends on K116, which acts as the N6-AMP-lysine intermediate. R137, E174, K291, and K315 together coordinate NAD(+). C409, C412, C427, and C433 together coordinate Zn(2+). In terms of domain architecture, BRCT spans 593–669 (EIPQPLAGKV…QTEQDLLALL (77 aa)).

The protein belongs to the NAD-dependent DNA ligase family. LigA subfamily. Mg(2+) serves as cofactor. The cofactor is Mn(2+).

The catalysed reaction is NAD(+) + (deoxyribonucleotide)n-3'-hydroxyl + 5'-phospho-(deoxyribonucleotide)m = (deoxyribonucleotide)n+m + AMP + beta-nicotinamide D-nucleotide.. DNA ligase that catalyzes the formation of phosphodiester linkages between 5'-phosphoryl and 3'-hydroxyl groups in double-stranded DNA using NAD as a coenzyme and as the energy source for the reaction. It is essential for DNA replication and repair of damaged DNA. The protein is DNA ligase of Vibrio vulnificus (strain YJ016).